A 780-amino-acid polypeptide reads, in one-letter code: B3 domain-containing transcription repressor VAL2 (780 aa).

A DNA-binding region (TF-B3) is located at residues 286 to 387 (FEKVLSASDA…KLVMGYRKAT (102 aa)). A CW-type zinc finger spans residues 515–565 (TGEQEQWVQCDACGKWRQLPVDILLPPKWSCSDNLLDPGRSSCSAPDELSP). Zn(2+)-binding residues include cysteine 524, cysteine 527, cysteine 545, and cysteine 557. Disordered regions lie at residues 577 to 608 (EFKR…AGIT), 669 to 695 (KRNK…TEVE), and 743 to 780 (NTAG…DPVN). A compositionally biased stretch (polar residues) spans 584–603 (ASSNEKLNQSQDASALNSLG). The span at 674 to 686 (EAGQASQQAQSQS) shows a compositional bias: low complexity. Over residues 743–765 (NTAGEQQSSDMVSTEHGSSSAAQ) the composition is skewed to polar residues.

It is found in the nucleus. Functionally, transcriptional repressor of gene expression involved in embryonic pathways, such as LEC1, ABI3, and FUS3. Repressor of the sugar-inducible genes involved in the seed maturation program in seedlings. Plays an essential role in regulating the transition from seed maturation to seedling growth. Functionally redundant with VAL1/HSI2. The sequence is that of B3 domain-containing transcription repressor VAL2 (VAL2) from Arabidopsis thaliana (Mouse-ear cress).